Here is a 128-residue protein sequence, read N- to C-terminus: Azurin (128 aa).

In terms of domain architecture, Plastocyanin-like spans 1–128 (AECKTTIDST…SMMKGTVTLK (128 aa)). C3 and C26 are oxidised to a cystine. Residues H46, C112, H117, and M121 each coordinate Cu cation.

It localises to the periplasm. Its function is as follows. Transfers electrons from cytochrome c551 to cytochrome oxidase. The protein is Azurin of Pseudomonas fluorescens biotype B.